The chain runs to 510 residues: 2,3-bisphosphoglycerate-independent phosphoglycerate mutase (510 aa).

Residues aspartate 15 and serine 65 each contribute to the Mn(2+) site. Serine 65 (phosphoserine intermediate) is an active-site residue. Substrate contacts are provided by residues histidine 126, 155–156, arginine 187, arginine 193, 259–262, and lysine 332; these read RD and RPDR. Positions 399, 403, 440, 441, and 458 each coordinate Mn(2+).

The protein belongs to the BPG-independent phosphoglycerate mutase family. Requires Mn(2+) as cofactor.

It localises to the plastid. Its subcellular location is the chloroplast. It carries out the reaction (2R)-2-phosphoglycerate = (2R)-3-phosphoglycerate. It participates in carbohydrate degradation; glycolysis; pyruvate from D-glyceraldehyde 3-phosphate: step 3/5. Catalyzes the interconversion of 2-phosphoglycerate and 3-phosphoglycerate. This chain is 2,3-bisphosphoglycerate-independent phosphoglycerate mutase, found in Antithamnion sp. (Red alga).